Consider the following 234-residue polypeptide: MVELQDKVAVVTGASSGIGASIAETLANQGVKVVLTGRDESRLAEVAKRIQDNKQAVVETSIVDVTHKEEVTELVEKTKEKFGQIDILVNSAGLMLSSAITEGDVEAWEAMIDVNIKGTLYTINAVLPSMLNQSSGHIINIASISGFEVTKKSTLYSASKAAVHSITQGLEKELAKTGVRVTSISPGMVDTPLSGDTDWGARKKLDPKDIAEAAIYALQQPSHVNVNEVTVRPV.

10-34 (VVTGASSGIGASIAETLANQGVKVV) is a binding site for NADP(+). Ser143 is a substrate binding site. The active-site Proton acceptor is Tyr156.

Belongs to the short-chain dehydrogenases/reductases (SDR) family.

This is an uncharacterized protein from Staphylococcus saprophyticus subsp. saprophyticus (strain ATCC 15305 / DSM 20229 / NCIMB 8711 / NCTC 7292 / S-41).